A 138-amino-acid polypeptide reads, in one-letter code: PilB-specific inhibitory protein CpiA (138 aa).

Interacts with PilB but not with TfpB.

In terms of biological role, acts as a PilB inhibitor to control natural transformation. Inhibits type IV pili (T4P) extension by specifically binding and inhibiting the pilus extension ATPase PilB but not TfpB. This activity probably modulates T4P extension under different environmental conditions. The protein is PilB-specific inhibitory protein CpiA of Acinetobacter baylyi (strain ATCC 33305 / BD413 / ADP1).